The primary structure comprises 522 residues: Ribonuclease Y (522 aa).

The helical transmembrane segment at 3–23 (ELIMYILATAVVSIGVGIVAG) threads the bilayer. Residues 212–272 (CVSIFNIESD…VRREVARLSL (61 aa)) form the KH domain. The HD domain maps to 338 to 431 (LLQHSREVAK…VQVCDAISGA (94 aa)).

This sequence belongs to the RNase Y family.

The protein resides in the cell membrane. Functionally, endoribonuclease that initiates mRNA decay. This is Ribonuclease Y from Cytophaga hutchinsonii (strain ATCC 33406 / DSM 1761 / CIP 103989 / NBRC 15051 / NCIMB 9469 / D465).